Consider the following 462-residue polypeptide: L-seryl-tRNA(Sec) selenium transferase (462 aa).

The residue at position 293 (Lys-293) is an N6-(pyridoxal phosphate)lysine.

The protein belongs to the SelA family. It depends on pyridoxal 5'-phosphate as a cofactor.

It localises to the cytoplasm. The enzyme catalyses L-seryl-tRNA(Sec) + selenophosphate + H(+) = L-selenocysteinyl-tRNA(Sec) + phosphate. It functions in the pathway aminoacyl-tRNA biosynthesis; selenocysteinyl-tRNA(Sec) biosynthesis; selenocysteinyl-tRNA(Sec) from L-seryl-tRNA(Sec) (bacterial route): step 1/1. Its function is as follows. Converts seryl-tRNA(Sec) to selenocysteinyl-tRNA(Sec) required for selenoprotein biosynthesis. This Clostridium botulinum (strain 657 / Type Ba4) protein is L-seryl-tRNA(Sec) selenium transferase.